We begin with the raw amino-acid sequence, 169 residues long: dCTP pyrophosphatase 1 (169 aa).

The segment at 1-26 (MSASEEMLGGARGESTTATGPFSFSS) is disordered. Residues 14-26 (ESTTATGPFSFSS) are compositionally biased toward polar residues. Substrate is bound by residues histidine 37 and 46–50 (WEQFH). Residues glutamate 62 and glutamate 65 each contribute to the Mg(2+) site. Substrate is bound at residue tryptophan 72. Serine 84 carries the post-translational modification Phosphoserine. Mg(2+)-binding residues include glutamate 94 and aspartate 97. Residue tyrosine 101 participates in substrate binding. The tract at residues 143–169 (LPHGATSENQAMGPADPASESTGQVST) is disordered.

Homotetramer. It depends on Mg(2+) as a cofactor.

Its subcellular location is the cytoplasm. The protein localises to the cytosol. It catalyses the reaction dCTP + H2O = dCMP + diphosphate + H(+). Its function is as follows. Hydrolyzes deoxynucleoside triphosphates (dNTPs) to the corresponding nucleoside monophosphates. Has a strong preference for dCTP and its analogs including 5-iodo-dCTP and 5-methyl-dCTP for which it may even have a higher efficiency. May protect DNA or RNA against the incorporation of these genotoxic nucleotide analogs through their catabolism. The protein is dCTP pyrophosphatase 1 of Bos taurus (Bovine).